The following is a 174-amino-acid chain: Balbiani ring protein 1 (174 aa).

Residues K28–R174 form a disordered region. 8 repeat units span residues E42–E52, K53–E63, K64–E74, K75–E85, E124–E134, K135–E145, K146–E156, and K157–E167. 4 X 11 AA tandem repeats regions lie at residues E42–E85 and E124–E167. Basic and acidic residues-rich tracts occupy residues P49 to A100 and R121 to S159.

As to expression, salivary gland.

It localises to the secreted. Functionally, used by the larvae to construct a supramolecular structure, the larval tube. In Chironomus tentans (Midge), this protein is Balbiani ring protein 1 (BR1).